A 157-amino-acid polypeptide reads, in one-letter code: Small ribosomal subunit protein uS7 (157 aa).

Belongs to the universal ribosomal protein uS7 family. As to quaternary structure, part of the 30S ribosomal subunit. Contacts proteins S9 and S11.

Functionally, one of the primary rRNA binding proteins, it binds directly to 16S rRNA where it nucleates assembly of the head domain of the 30S subunit. Is located at the subunit interface close to the decoding center, probably blocks exit of the E-site tRNA. This chain is Small ribosomal subunit protein uS7, found in Delftia acidovorans (strain DSM 14801 / SPH-1).